A 473-amino-acid chain; its full sequence is FAD-dependent urate hydroxylase (473 aa).

It belongs to the HpyO family. Homodimer. FAD serves as cofactor.

It carries out the reaction urate + NADH + O2 + H(+) = 5-hydroxyisourate + NAD(+) + H2O. The enzyme catalyses urate + NADPH + O2 + H(+) = 5-hydroxyisourate + NADP(+) + H2O. The protein operates within purine metabolism; urate degradation. In terms of biological role, catalyzes the hydroxylation of urate to 5-hydroxyisourate (HIU). Is likely to be involved in the urate degradation pathway to allantoin. Is slightly more efficient (about 2.6 times) with NADPH than NADH as the electron donor. In Xanthomonas campestris pv. campestris (strain ATCC 33913 / DSM 3586 / NCPPB 528 / LMG 568 / P 25), this protein is FAD-dependent urate hydroxylase.